Consider the following 409-residue polypeptide: Probable ferredoxin reductase CtmF (409 aa).

Residues A15, D37, K50, V83, D279, and V298 each coordinate FAD.

The protein belongs to the FAD-dependent oxidoreductase family. FAD serves as cofactor.

It participates in terpene metabolism; monoterpene degradation. Involved in the degradation of the cyclic monoterpene limonene. Probably part of an electron transfer system involved in the oxidation of limonene to perillyl alcohol. This is Probable ferredoxin reductase CtmF from Castellaniella defragrans (strain DSM 12143 / CCUG 39792 / 65Phen) (Alcaligenes defragrans).